Consider the following 310-residue polypeptide: Syndecan-1 (310 aa).

The first 22 residues, 1–22, serve as a signal peptide directing secretion; that stretch reads MRRAALWLWLCALALSLQPALP. Over 23 to 254 the chain is Extracellular; sequence QIVATNLPPE…GLLDRKEVLG (232 aa). Disordered regions lie at residues 27-100 and 114-212; these read TNLP…EGPK and LTAR…QDFT. Positions 32–42 are enriched in acidic residues; the sequence is EDQDGSGDDSD. Residue Ser37 is glycosylated (O-linked (Xyl...) (chondroitin sulfate) serine). An N-linked (GlcNAc...) asparagine glycan is attached at Asn43. 2 O-linked (Xyl...) (heparan sulfate) serine glycosylation sites follow: Ser45 and Ser47. Polar residues predominate over residues 55-75; that stretch reads ITLSQQTPSTWKDTQLLTAIP. Basic and acidic residues predominate over residues 117–127; the sequence is REQEATPRPRE. Positions 128-151 are enriched in low complexity; it reads TTQLPTTHLASTTTATTAQEPATS. A compositionally biased stretch (basic and acidic residues) spans 153–164; that stretch reads PHRDMQPGHHET. Ser206 and Ser216 each carry an O-linked (Xyl...) (chondroitin sulfate) serine glycan. The chain crosses the membrane as a helical span at residues 255–275; it reads GVIAGGLVGLIFAVCLVGFML. The Cytoplasmic segment spans residues 276–310; it reads YRMKKKDEGSYSLEEPKQANGGAYQKPTKQEEFYA. Positions 284-310 are disordered; the sequence is GSYSLEEPKQANGGAYQKPTKQEEFYA. Residue Ser285 is modified to Phosphoserine.

The protein belongs to the syndecan proteoglycan family. In terms of assembly, interacts with CDCP1. Interacts (via C-terminus) with TIAM1 (via PDZ domain). Interacts with MDK. Post-translationally, shedding is enhanced by a number of factors such as heparanase, thrombin or EGF. Also by stress and wound healing. PMA-mediated shedding is inhibited by TIMP3. As to expression, detected in placenta (at protein level). Detected in fibroblasts (at protein level).

The protein resides in the membrane. The protein localises to the secreted. Its subcellular location is the extracellular exosome. In terms of biological role, cell surface proteoglycan that contains both heparan sulfate and chondroitin sulfate and that links the cytoskeleton to the interstitial matrix. Regulates exosome biogenesis in concert with SDCBP and PDCD6IP. Able to induce its own expression in dental mesenchymal cells and also in the neighboring dental epithelial cells via an MSX1-mediated pathway. The protein is Syndecan-1 of Homo sapiens (Human).